Here is a 629-residue protein sequence, read N- to C-terminus: tRNA uridine 5-carboxymethylaminomethyl modification enzyme MnmG (629 aa).

Residues 13-18 (GGGHAG), Val-125, and Ser-180 contribute to the FAD site. 273 to 287 (GPRYCPSIEDKVMRF) contacts NAD(+). Gln-370 serves as a coordination point for FAD.

This sequence belongs to the MnmG family. In terms of assembly, homodimer. Heterotetramer of two MnmE and two MnmG subunits. FAD serves as cofactor.

The protein localises to the cytoplasm. Its function is as follows. NAD-binding protein involved in the addition of a carboxymethylaminomethyl (cmnm) group at the wobble position (U34) of certain tRNAs, forming tRNA-cmnm(5)s(2)U34. This is tRNA uridine 5-carboxymethylaminomethyl modification enzyme MnmG from Salmonella dublin (strain CT_02021853).